We begin with the raw amino-acid sequence, 454 residues long: UPF0210 protein BLA_0552 (454 aa).

This sequence belongs to the UPF0210 family. In terms of assembly, homodimer.

In Bifidobacterium animalis subsp. lactis (strain AD011), this protein is UPF0210 protein BLA_0552.